We begin with the raw amino-acid sequence, 158 residues long: Transcriptional repressor NrdR (158 aa).

A zinc finger spans residues 3–34; sequence CPFCGSLDTQVIDSRANEAGDAIRRRRRCAAC. One can recognise an ATP-cone domain in the interval 49 to 139; it reads PQIVKTNGTR…VYKSFKDPDD (91 aa).

It belongs to the NrdR family. Zn(2+) serves as cofactor.

In terms of biological role, negatively regulates transcription of bacterial ribonucleotide reductase nrd genes and operons by binding to NrdR-boxes. This is Transcriptional repressor NrdR from Thiobacillus denitrificans (strain ATCC 25259 / T1).